Consider the following 179-residue polypeptide: UPF0398 protein Bsph_0756 (179 aa).

It belongs to the UPF0398 family.

This is UPF0398 protein Bsph_0756 from Lysinibacillus sphaericus (strain C3-41).